We begin with the raw amino-acid sequence, 655 residues long: Serine/threonine-protein kinase SKM1 (655 aa).

Residues 3–118 form the PH domain; sequence GVKKEGWISY…WLDAIFAKCP (116 aa). The CRIB domain maps to 123-136; it reads VSSPTNFTHKVHVG. Basic and acidic residues-rich tracts occupy residues 265–276 and 318–327; these read EEGRVHVSKEST and KNHDSKTKWH. Residues 265–327 are disordered; that stretch reads EEGRVHVSKE…KNHDSKTKWH (63 aa). The Protein kinase domain maps to 360–639; sequence FQLVEKAGQG…VRKLLTFEFL (280 aa). ATP is bound by residues 366-374 and Lys406; that span reads AGQGASGAV. Catalysis depends on Asp507, which acts as the Proton acceptor.

This sequence belongs to the protein kinase superfamily. STE Ser/Thr protein kinase family. STE20 subfamily.

The catalysed reaction is L-seryl-[protein] + ATP = O-phospho-L-seryl-[protein] + ADP + H(+). It catalyses the reaction L-threonyl-[protein] + ATP = O-phospho-L-threonyl-[protein] + ADP + H(+). May be involved in cellular signaling or cytoskeletal functions. May play a role in morphogenetic control. In Saccharomyces cerevisiae (strain ATCC 204508 / S288c) (Baker's yeast), this protein is Serine/threonine-protein kinase SKM1 (SKM1).